We begin with the raw amino-acid sequence, 191 residues long: Leucyl/phenylalanyl-tRNA--protein transferase (191 aa).

It belongs to the L/F-transferase family.

The protein resides in the cytoplasm. The enzyme catalyses N-terminal L-lysyl-[protein] + L-leucyl-tRNA(Leu) = N-terminal L-leucyl-L-lysyl-[protein] + tRNA(Leu) + H(+). It carries out the reaction N-terminal L-arginyl-[protein] + L-leucyl-tRNA(Leu) = N-terminal L-leucyl-L-arginyl-[protein] + tRNA(Leu) + H(+). It catalyses the reaction L-phenylalanyl-tRNA(Phe) + an N-terminal L-alpha-aminoacyl-[protein] = an N-terminal L-phenylalanyl-L-alpha-aminoacyl-[protein] + tRNA(Phe). Functionally, functions in the N-end rule pathway of protein degradation where it conjugates Leu, Phe and, less efficiently, Met from aminoacyl-tRNAs to the N-termini of proteins containing an N-terminal arginine or lysine. The sequence is that of Leucyl/phenylalanyl-tRNA--protein transferase from Gloeothece citriformis (strain PCC 7424) (Cyanothece sp. (strain PCC 7424)).